A 297-amino-acid chain; its full sequence is Formylmethanofuran--tetrahydromethanopterin formyltransferase-like protein (297 aa).

It belongs to the FTR family.

The sequence is that of Formylmethanofuran--tetrahydromethanopterin formyltransferase-like protein (ehaS) from Methanothermobacter thermautotrophicus (strain ATCC 29096 / DSM 1053 / JCM 10044 / NBRC 100330 / Delta H) (Methanobacterium thermoautotrophicum).